Reading from the N-terminus, the 366-residue chain is tRNA(Met) cytidine acetate ligase (366 aa).

ATP-binding positions include 7-20 (VAEFNPFHYGHKYL), Gly-96, Asn-152, and Arg-175.

Belongs to the TmcAL family.

The protein localises to the cytoplasm. The catalysed reaction is cytidine(34) in elongator tRNA(Met) + acetate + ATP = N(4)-acetylcytidine(34) in elongator tRNA(Met) + AMP + diphosphate. Its function is as follows. Catalyzes the formation of N(4)-acetylcytidine (ac(4)C) at the wobble position of elongator tRNA(Met), using acetate and ATP as substrates. First activates an acetate ion to form acetyladenylate (Ac-AMP) and then transfers the acetyl group to tRNA to form ac(4)C34. In Streptococcus uberis (strain ATCC BAA-854 / 0140J), this protein is tRNA(Met) cytidine acetate ligase.